Here is a 450-residue protein sequence, read N- to C-terminus: Exodeoxyribonuclease 7 large subunit (450 aa).

It belongs to the XseA family. Heterooligomer composed of large and small subunits.

It is found in the cytoplasm. The catalysed reaction is Exonucleolytic cleavage in either 5'- to 3'- or 3'- to 5'-direction to yield nucleoside 5'-phosphates.. In terms of biological role, bidirectionally degrades single-stranded DNA into large acid-insoluble oligonucleotides, which are then degraded further into small acid-soluble oligonucleotides. This chain is Exodeoxyribonuclease 7 large subunit, found in Rickettsia felis (strain ATCC VR-1525 / URRWXCal2) (Rickettsia azadi).